Here is a 95-residue protein sequence, read N- to C-terminus: Aspartyl/glutamyl-tRNA(Asn/Gln) amidotransferase subunit C (95 aa).

Belongs to the GatC family. In terms of assembly, heterotrimer of A, B and C subunits.

It carries out the reaction L-glutamyl-tRNA(Gln) + L-glutamine + ATP + H2O = L-glutaminyl-tRNA(Gln) + L-glutamate + ADP + phosphate + H(+). The enzyme catalyses L-aspartyl-tRNA(Asn) + L-glutamine + ATP + H2O = L-asparaginyl-tRNA(Asn) + L-glutamate + ADP + phosphate + 2 H(+). In terms of biological role, allows the formation of correctly charged Asn-tRNA(Asn) or Gln-tRNA(Gln) through the transamidation of misacylated Asp-tRNA(Asn) or Glu-tRNA(Gln) in organisms which lack either or both of asparaginyl-tRNA or glutaminyl-tRNA synthetases. The reaction takes place in the presence of glutamine and ATP through an activated phospho-Asp-tRNA(Asn) or phospho-Glu-tRNA(Gln). In Azotobacter vinelandii (strain DJ / ATCC BAA-1303), this protein is Aspartyl/glutamyl-tRNA(Asn/Gln) amidotransferase subunit C.